Consider the following 109-residue polypeptide: Globin (109 aa).

The Globin domain maps to 3–109 (PLTAAEVSSL…IFPIAGIHAL (107 aa)).

The protein belongs to the globin family. Monomer.

Functionally, oxygen binding protein. In Dicrocoelium dendriticum (Small liver fluke), this protein is Globin.